Reading from the N-terminus, the 1055-residue chain is cAMP and cAMP-inhibited cGMP 3',5'-cyclic phosphodiesterase 10A (1055 aa).

3 disordered regions span residues 1-90 (MASL…RGGG), 151-193 (AAAA…GRRR), and 205-250 (LPAR…RPQG). 2 stretches are compositionally biased toward gly residues: residues 79–90 (GGPGALSARGGG) and 154–168 (AGGGGDAGGGGGGGQ). Over residues 220 to 231 (PLGQAARRAGSP) the composition is skewed to low complexity. Residues 232–243 (GFPGAGPGGGGQ) are compositionally biased toward gly residues. Thr282 carries the post-translational modification Phosphothreonine. 2 consecutive GAF domains span residues 367-510 (DNQL…SVAI) and 542-688 (AIDS…ALAL). Residues 562-563 (RC), 606-607 (IA), Thr640, Gln659, and His791 each bind 3',5'-cyclic AMP. Positions 718–1035 (TSEEWQGLMQ…SQWEKVIRGE (318 aa)) constitute a PDEase domain. His791 acts as the Proton donor in catalysis. Position 791 (His791) interacts with 3',5'-cyclic GMP. Positions 795, 829, 830, and 940 each coordinate a divalent metal cation. Position 992 (Gln992) interacts with 3',5'-cyclic AMP. Residue Gln992 participates in 3',5'-cyclic GMP binding.

It belongs to the cyclic nucleotide phosphodiesterase family. In terms of assembly, homodimer. The cofactor is a divalent metal cation. Phosphorylated on Thr-16. As to expression, abundant in the putamen and caudate nucleus regions of brain and testis, moderately expressed in the thyroid gland, pituitary gland, thalamus and cerebellum.

The protein resides in the cytoplasm. It localises to the cytosol. The catalysed reaction is a nucleoside 3',5'-cyclic phosphate + H2O = a nucleoside 5'-phosphate + H(+). It carries out the reaction 3',5'-cyclic AMP + H2O = AMP + H(+). It catalyses the reaction 3',5'-cyclic GMP + H2O = GMP + H(+). The protein operates within purine metabolism; 3',5'-cyclic AMP degradation; AMP from 3',5'-cyclic AMP: step 1/1. It functions in the pathway purine metabolism; 3',5'-cyclic GMP degradation; GMP from 3',5'-cyclic GMP: step 1/1. With respect to regulation, inhibited by dipyridamole and moderately by IBMX. cGMP acts as an allosteric activator. Its function is as follows. Plays a role in signal transduction by regulating the intracellular concentration of cyclic nucleotides. Can hydrolyze both cAMP and cGMP, but has higher affinity for cAMP and is more efficient with cAMP as substrate. May play a critical role in regulating cAMP and cGMP levels in the striatum, a region of the brain that contributes to the control of movement and cognition. This Homo sapiens (Human) protein is cAMP and cAMP-inhibited cGMP 3',5'-cyclic phosphodiesterase 10A (PDE10A).